Consider the following 151-residue polypeptide: Transcriptional repressor NrdR (151 aa).

Residues 3-34 (CPYCGSLDNKVIDSRLSRDDTETRRRRECLEC) fold into a zinc finger. Residues 49–139 (LMIVKKDGRR…VYREFKDVHD (91 aa)) enclose the ATP-cone domain.

This sequence belongs to the NrdR family. Zn(2+) serves as cofactor.

In terms of biological role, negatively regulates transcription of bacterial ribonucleotide reductase nrd genes and operons by binding to NrdR-boxes. The sequence is that of Transcriptional repressor NrdR from Desulfosudis oleivorans (strain DSM 6200 / JCM 39069 / Hxd3) (Desulfococcus oleovorans).